The sequence spans 367 residues: Leucine-rich repeat-containing protein 28 (367 aa).

LRR repeat units follow at residues 16-36 (KHKNLFLNYRNLNHFPLELLK), 42-63 (YLERLYMKRNSLTTLPENLAQK), 66-87 (NLVELYLHSNNIVFVPEAIGSL), 89-111 (KLQSLDLSNNALEILCPDIGRLK), 112-133 (SLRHLRLTNNRLKFLPPEIGKL), 135-156 (ELQTLDLSTNHLVSLPEKLYQC), 158-179 (SLQYLTVDRNLLCSIPRQLCQL), 181-202 (SLNELSMAGNRLASLPLDLGRS), and 204-226 (ELQYVYVDNNVQLKGLPSYLYNK).

This Xenopus tropicalis (Western clawed frog) protein is Leucine-rich repeat-containing protein 28 (lrrc28).